The sequence spans 118 residues: Small ribosomal subunit protein uS13 (118 aa).

Positions 94-118 are disordered; the sequence is SLPVHGQRTKTNARTCKGPRKPIKK.

The protein belongs to the universal ribosomal protein uS13 family. Part of the 30S ribosomal subunit. Forms a loose heterodimer with protein S19. Forms two bridges to the 50S subunit in the 70S ribosome.

Located at the top of the head of the 30S subunit, it contacts several helices of the 16S rRNA. In the 70S ribosome it contacts the 23S rRNA (bridge B1a) and protein L5 of the 50S subunit (bridge B1b), connecting the 2 subunits; these bridges are implicated in subunit movement. Contacts the tRNAs in the A and P-sites. The protein is Small ribosomal subunit protein uS13 of Buchnera aphidicola subsp. Acyrthosiphon pisum (strain 5A).